A 311-amino-acid polypeptide reads, in one-letter code: Meiotically up-regulated gene 146 protein (311 aa).

The protein localises to the cytoplasm. It is found in the nucleus. In terms of biological role, has a role in sporulation. This Schizosaccharomyces pombe (strain 972 / ATCC 24843) (Fission yeast) protein is Meiotically up-regulated gene 146 protein (mug146).